Reading from the N-terminus, the 698-residue chain is Transcription factor cwo (698 aa).

The interval 62-75 (QDPLSHRIIEKRRR) is basic motif; degenerate. One can recognise a bHLH domain in the interval 62–117 (QDPLSHRIIEKRRRDRMNSCLADLSRLIPPQYQRKGRGRIEKTEIIEMAIRHLKHL). Residues 76 to 117 (DRMNSCLADLSRLIPPQYQRKGRGRIEKTEIIEMAIRHLKHL) form a helix-loop-helix motif region. Residues 128–159 (YRSGYMDCMKEAAKFLYDVHMQDFCHRLLGRL) enclose the Orange domain. 2 disordered regions span residues 257-319 (SSPA…ASST) and 349-369 (STAPHHHHHHTDSSHHDFESS). Over residues 280–318 (APPAADNVPSNSTGSGSAAACAGGNSNSSGSNSSNAASS) the composition is skewed to low complexity. Over residues 359–369 (TDSSHHDFESS) the composition is skewed to basic and acidic residues.

In terms of tissue distribution, expressed in adult brain where it is detected in the dorsal lateral neurons, small and large ventral lateral neurons and dorsal neurons 1, 2 and 3 (at protein level). Expressed at constant levels in a 12 hour light / 12 hour day cycle (at protein level). Strongly expressed in pacemaker neurons. In adults, mRNA expression oscillates in a circadian manner with a peak at around 14 hour Zeitgeber time. mRNA levels oscillate in a rhythmic manner in both 12 hour light / 12 hour dark and constant dark conditions with a morning peak around the time of lights-on and an evening peak around the time of lights-off in light/dark conditions. During stage 8 of embryonic development, expressed in the anterior and posterior midgut primordia and expression in the gut continues throughout embryonic development. During germ band retraction, expression is initiated in many tissues in a prominent segmentally repeated pattern. Later, expression is ubiquitous but has higher levels in segmentally repeated clusters of cells. Expression is also found in cells of the amnioserosa, in the head region, in posterior spiracles and in tracheal trees.

It localises to the nucleus. Its function is as follows. Plays a role in the regulation of circadian rhythms. Transcriptional repressor which inhibits Clock-mediated transcriptional activation by binding to E boxes in the promoters of Clock target genes and repressing their transcription. E box binding activity is time-dependent with higher binding activity seen in the early morning (zeitgeber time 2) than early evening (zeitgeber time 14) and is dependent on the presence of the circadian protein per. It is likely that per binds to Clock-cycle heterodimers, reducing their affinity for E box binding and allowing cwo to bind instead. Negatively regulates its own expression. The sequence is that of Transcription factor cwo from Drosophila melanogaster (Fruit fly).